The chain runs to 257 residues: UPF0246 protein Ping_3037 (257 aa).

Belongs to the UPF0246 family.

The chain is UPF0246 protein Ping_3037 from Psychromonas ingrahamii (strain DSM 17664 / CCUG 51855 / 37).